The chain runs to 391 residues: ATP phosphoribosyltransferase regulatory subunit (391 aa).

Belongs to the class-II aminoacyl-tRNA synthetase family. HisZ subfamily. Heteromultimer composed of HisG and HisZ subunits.

Its subcellular location is the cytoplasm. It participates in amino-acid biosynthesis; L-histidine biosynthesis; L-histidine from 5-phospho-alpha-D-ribose 1-diphosphate: step 1/9. Its function is as follows. Required for the first step of histidine biosynthesis. May allow the feedback regulation of ATP phosphoribosyltransferase activity by histidine. This Clostridium kluyveri (strain ATCC 8527 / DSM 555 / NBRC 12016 / NCIMB 10680 / K1) protein is ATP phosphoribosyltransferase regulatory subunit.